Here is a 566-residue protein sequence, read N- to C-terminus: Arginine--tRNA ligase (566 aa).

The 'HIGH' region motif lies at 121 to 131 (PNIAKPMSMGH).

It belongs to the class-I aminoacyl-tRNA synthetase family. Monomer.

It localises to the cytoplasm. The catalysed reaction is tRNA(Arg) + L-arginine + ATP = L-arginyl-tRNA(Arg) + AMP + diphosphate. The protein is Arginine--tRNA ligase of Oenococcus oeni (strain ATCC BAA-331 / PSU-1).